The chain runs to 459 residues: Cysteine--tRNA ligase (459 aa).

Cys-28 lines the Zn(2+) pocket. Residues 30–40 (VTIYDLCHIGH) carry the 'HIGH' region motif. Cys-209, His-234, and Glu-238 together coordinate Zn(2+). The short motif at 266–270 (KMSKS) is the 'KMSKS' region element. Position 269 (Lys-269) interacts with ATP.

It belongs to the class-I aminoacyl-tRNA synthetase family. As to quaternary structure, monomer. Requires Zn(2+) as cofactor.

It is found in the cytoplasm. The catalysed reaction is tRNA(Cys) + L-cysteine + ATP = L-cysteinyl-tRNA(Cys) + AMP + diphosphate. The chain is Cysteine--tRNA ligase from Shewanella piezotolerans (strain WP3 / JCM 13877).